Consider the following 349-residue polypeptide: Actin cytoskeleton-regulatory complex protein END3 (349 aa).

EH domains are found at residues Glu-8–Asn-98 and Asp-130–Lys-222. The EF-hand 1 domain occupies Leu-40–Met-75. Ca(2+)-binding residues include Asp-53, Asp-55, Asp-57, Asn-59, and Glu-64. The segment at Lys-96–Lys-105 is polyphosphoinositide (PIP2)-binding. Residues Asp-146–Asn-164 form the EF-hand 2 domain. Positions Tyr-226 to Ser-265 are disordered. A compositionally biased stretch (basic and acidic residues) spans Lys-236–Arg-248. Low complexity predominate over residues Asp-249–Ser-265. Ser-276 carries the post-translational modification Phosphoserine. Tandem repeats lie at residues Ser-276–Tyr-295 and Ser-315–Leu-334. Residues Ser-276–Leu-334 form a 2 X 20 AA approximate repeats region. The stretch at Leu-307–Asn-349 forms a coiled coil.

It belongs to the END3 family. In terms of assembly, component of the PAN1 actin cytoskeleton-regulatory complex composed of at least END3, PAN1, and SLA1. Interacts with SCD5, SLA2 and YAP1802. Interacts directly with PAN1; the interaction with PAN1 is prevented by PAN1 phosphorylation by PKR1.

The protein localises to the cell membrane. It localises to the endosome membrane. Its subcellular location is the cytoplasm. The protein resides in the cytoskeleton. It is found in the actin patch. Functionally, component of the PAN1 actin cytoskeleton-regulatory complex required for the internalization of endosomes during actin-coupled endocytosis. The complex links the site of endocytosis to the cell membrane-associated actin cytoskeleton. Mediates uptake of external molecules and vacuolar degradation of plasma membrane proteins. Plays a role in the proper organization of the cell membrane-associated actin cytoskeleton and promotes its destabilization. END3 regulates PAN1 function by preventing phosphorylation of PAN1 by PKR1 and is also involved in the correct localization of SLA1 to the cell cortex, in the bipolar budding of diploid cells and the correct distribution of chitin at the cell surface. This Saccharomyces cerevisiae (strain ATCC 204508 / S288c) (Baker's yeast) protein is Actin cytoskeleton-regulatory complex protein END3 (END3).